Consider the following 839-residue polypeptide: MEADPKVPFTDEMNIQDEHNWESGSWSSSRRSNDSNVTLLSRRSSVEQHEDERQKDSDTLFEHGDAALDAQGIADPRLKDYPIPLVAQTVHLRNDDSEPILTFRVWLLSTFWVLAGCSISTVYYFKPFSVRLSGYVVQLCTWKMGQLLASALPTRPFTVLGRRWTLNPGRWSAKEHALVVIAYWGSSYTAYGLGPLSAMELFYGKRLSSPWAITFLVTTQLTGYGLVGLYRHILVRPPSMYYPGILPTVSLFNAMHGDPRQTASSLRVFMAIASAAFVYQWLPSFVFPLLSSLPLLCWVGRGSWEAFVLGSGSLGFGLMDFSLDWNYVAFLSPLFTPLWANANRFVGAALAVWITYPVAYFSDALGSLRFPPMSSETFDTSGGLYNVSRIMTPSLELNQTALELYSTPRWSFSYAMHFFWGFASASAMVTYAVLFHGRTILKALANVWSLDGNTADDIDSEKDPYVKLTSHHARVPQAWYALLLAVCLCLGTIQLYAGDMQLPWWGLQLVVAISALFTLPCGMLFATANVQIGMDYVSEVLAGALFPGRPVAVLTATVYGRQVLEQCLNLASDLKLGFYMKIPEWELLVAQVYGTLLGPFVNWAVMRLIIDTQGAAALLGREGGDGKRQGLGLGQGGGGGGGGGGQQQRAAGAHTTEWNALKTKNFFSSSVIWGVMGPARVFGGGDGSPSSSSPYRWLLPSGFAVGAAAVLLLWLIHKARPAWRVQQWPLHPAIIFHGASLFPVFPTTNLTSSMAAAVASMGVMRRWHPRWFARWNYLLGAGLDCGAQLVQMVLGVAFLVFNRHGQQMVRMPHWWGNDAVAVDQCFPPPDLPSVIMSPM.

Positions 1-58 are disordered; the sequence is MEADPKVPFTDEMNIQDEHNWESGSWSSSRRSNDSNVTLLSRRSSVEQHEDERQKDSD. Residues 23-36 are compositionally biased toward low complexity; the sequence is SGSWSSSRRSNDSN. N-linked (GlcNAc...) asparagine glycosylation is found at Asn-33 and Asn-36. A compositionally biased stretch (basic and acidic residues) spans 44–58; that stretch reads SSVEQHEDERQKDSD. The next 6 helical transmembrane spans lie at 105–125, 177–197, 210–230, 268–288, 315–335, and 345–365; these read VWLL…VYYF, ALVV…GPLS, PWAI…VGLY, VFMA…FVFP, GFGL…SPLF, and FVGA…SDAL. N-linked (GlcNAc...) asparagine glycans are attached at residues Asn-386 and Asn-398. 4 helical membrane passes run 415–435, 478–498, 505–525, and 585–605; these read AMHF…AVLF, AWYA…LYAG, WGLQ…GMLF, and WELL…NWAV. Positions 629 to 646 are enriched in gly residues; sequence QGLGLGQGGGGGGGGGGQ. A disordered region spans residues 629 to 654; sequence QGLGLGQGGGGGGGGGGQQQRAAGAH. Transmembrane regions (helical) follow at residues 665-685, 697-717, and 728-748; these read NFFS…FGGG, WLLP…WLIH, and WPLH…FPTT. A glycan (N-linked (GlcNAc...) asparagine) is linked at Asn-749. A helical membrane pass occupies residues 781–801; it reads AGLDCGAQLVQMVLGVAFLVF.

It belongs to the oligopeptide OPT transporter family.

The protein localises to the membrane. In terms of biological role, oligopeptide transporter; part of the gene cluster that mediates the biosynthesis of the phomopsins, a group of hexapeptide mycotoxins which infects lupins and causes lupinosis disease in livestock. In Diaporthe leptostromiformis (Lupinosis disease fungus), this protein is Oligopeptide transporter phomP2.